The primary structure comprises 323 residues: Mortality factor 4-like protein 1 (323 aa).

Residues Q12–V62 form the Tudor-knot domain. The segment at L76–T143 is disordered. The interval P94–V227 is sufficient for interaction with SIN3A. Positions K96 to D107 match the Nuclear localization signal motif. The residue at position 104 (K104) is an N6-acetyllysine. The interaction with RB1-1 stretch occupies residues S125–D191. Residues T149–A303 are sufficient for interaction with PHF12. The MRG domain maps to N152–V323. The tract at residues L284–L305 is interaction with RB1-2.

Component of the NuA4 histone acetyltransferase complex which contains the catalytic subunit KAT5/TIP60 and the subunits EP400, TRRAP/PAF400, BRD8/SMAP, EPC1, DMAP1/DNMAP1, RUVBL1/TIP49, RUVBL2, ING3, actin, ACTL6A/BAF53A, MORF4L1/MRG15, MORF4L2/MRGX, MRGBP, YEATS4/GAS41, VPS72/YL1 and MEAF6. The NuA4 complex interacts with MYC and the adenovirus E1A protein. MORF4L1 may also participate in the formation of NuA4 related complexes which lack the KAT5/TIP60 catalytic subunit, but which include the SWI/SNF related protein SRCAP. Component of the mSin3A histone deacetylase complex, which includes SIN3A, HDAC2, ARID4B, MORF4L1, RBBP4/RbAp48, and RBBP7/RbAp46. May also interact with PHF12 and one or more as yet undefined members of the TLE (transducin-like enhancer of split) family of transcriptional repressors. Component of the SIN3B complex, which includes SIN3B, HDAC2 or HDAC1, PHF12 and MORF4L1. Interacts with RB1 and KAT8. Interacts with the N-terminus of MRFAP1. Found in a complex composed of MORF4L1, MRFAP1 and RB1. Interacts with the entire BRCA complex, which contains BRCA1, PALB2, BRCA2 and RAD51. Interacts with PALB2. Forms a complex with MSL1 and NUPR1.

Its subcellular location is the nucleus. Its function is as follows. Component of the NuA4 histone acetyltransferase (HAT) complex which is involved in transcriptional activation of select genes principally by acetylation of nucleosomal histones H4 and H2A. This modification may both alter nucleosome - DNA interactions and promote interaction of the modified histones with other proteins which positively regulate transcription. This complex may be required for the activation of transcriptional programs associated with oncogene and proto-oncogene mediated growth induction, tumor suppressor mediated growth arrest and replicative senescence, apoptosis, and DNA repair. The NuA4 complex ATPase and helicase activities seem to be, at least in part, contributed by the association of RUVBL1 and RUVBL2 with EP400. NuA4 may also play a direct role in DNA repair when directly recruited to sites of DNA damage. As part of the SIN3B complex represses transcription and counteracts the histone acetyltransferase activity of EP300 through the recognition H3K27ac marks by PHF12 and the activity of the histone deacetylase HDAC2. SIN3B complex is recruited downstream of the constitutively active genes transcriptional start sites through interaction with histones and mitigates histone acetylation and RNA polymerase II progression within transcribed regions contributing to the regulation of transcription. Required for homologous recombination repair (HRR) and resistance to mitomycin C (MMC). Involved in the localization of PALB2, BRCA2 and RAD51, but not BRCA1, to DNA-damage foci. The protein is Mortality factor 4-like protein 1 (MORF4L1) of Pongo abelii (Sumatran orangutan).